The chain runs to 130 residues: Small ribosomal subunit protein uS9 (130 aa).

This sequence belongs to the universal ribosomal protein uS9 family.

This is Small ribosomal subunit protein uS9 from Neisseria gonorrhoeae (strain ATCC 700825 / FA 1090).